Reading from the N-terminus, the 80-residue chain is Turripeptide VI/VII-01 (80 aa).

The first 22 residues, 1 to 22 (MRLQLILTITLLLTSFMGYRDA), serve as a signal peptide directing secretion. Positions 23-36 (AVIQGKTERSAMKM) are excised as a propeptide. 3 disulfide bridges follow: Cys-48–Cys-61, Cys-50–Cys-65, and Cys-60–Cys-70. Residues 77-80 (SSAI) constitute a propeptide that is removed on maturation.

In terms of tissue distribution, expressed by the venom duct.

It localises to the secreted. This is Turripeptide VI/VII-01 from Gemmula speciosa (Splendid gem-turris).